Consider the following 731-residue polypeptide: 1,4-alpha-glucan branching enzyme GlgB (731 aa).

Asp-409 functions as the Nucleophile in the catalytic mechanism. Catalysis depends on Glu-462, which acts as the Proton donor.

The protein belongs to the glycosyl hydrolase 13 family. GlgB subfamily. Monomer.

The catalysed reaction is Transfers a segment of a (1-&gt;4)-alpha-D-glucan chain to a primary hydroxy group in a similar glucan chain.. It participates in glycan biosynthesis; glycogen biosynthesis. In terms of biological role, catalyzes the formation of the alpha-1,6-glucosidic linkages in glycogen by scission of a 1,4-alpha-linked oligosaccharide from growing alpha-1,4-glucan chains and the subsequent attachment of the oligosaccharide to the alpha-1,6 position. The sequence is that of 1,4-alpha-glucan branching enzyme GlgB from Roseobacter denitrificans (strain ATCC 33942 / OCh 114) (Erythrobacter sp. (strain OCh 114)).